A 430-amino-acid polypeptide reads, in one-letter code: Trigger factor (430 aa).

Positions 163–248 constitute a PPIase FKBP-type domain; it reads GNIAIIDFKG…IKDIKVKELP (86 aa).

This sequence belongs to the FKBP-type PPIase family. Tig subfamily.

It is found in the cytoplasm. The enzyme catalyses [protein]-peptidylproline (omega=180) = [protein]-peptidylproline (omega=0). In terms of biological role, involved in protein export. Acts as a chaperone by maintaining the newly synthesized protein in an open conformation. Functions as a peptidyl-prolyl cis-trans isomerase. The sequence is that of Trigger factor from Clostridium botulinum (strain Kyoto / Type A2).